Reading from the N-terminus, the 879-residue chain is Alanine--tRNA ligase (879 aa).

H566, H570, C668, and H672 together coordinate Zn(2+).

This sequence belongs to the class-II aminoacyl-tRNA synthetase family. The cofactor is Zn(2+).

It localises to the cytoplasm. It catalyses the reaction tRNA(Ala) + L-alanine + ATP = L-alanyl-tRNA(Ala) + AMP + diphosphate. In terms of biological role, catalyzes the attachment of alanine to tRNA(Ala) in a two-step reaction: alanine is first activated by ATP to form Ala-AMP and then transferred to the acceptor end of tRNA(Ala). Also edits incorrectly charged Ser-tRNA(Ala) and Gly-tRNA(Ala) via its editing domain. This is Alanine--tRNA ligase from Clostridium botulinum (strain Loch Maree / Type A3).